Here is a 445-residue protein sequence, read N- to C-terminus: Phosphoglucosamine mutase (445 aa).

Ser102 (phosphoserine intermediate) is an active-site residue. 4 residues coordinate Mg(2+): Ser102, Asp241, Asp243, and Asp245. Ser102 carries the phosphoserine modification.

This sequence belongs to the phosphohexose mutase family. It depends on Mg(2+) as a cofactor. Activated by phosphorylation.

The enzyme catalyses alpha-D-glucosamine 1-phosphate = D-glucosamine 6-phosphate. Functionally, catalyzes the conversion of glucosamine-6-phosphate to glucosamine-1-phosphate. This Aliivibrio salmonicida (strain LFI1238) (Vibrio salmonicida (strain LFI1238)) protein is Phosphoglucosamine mutase.